The sequence spans 574 residues: MCPRAARAPATLLLALGAVLWPAAGAWELTILHTNDVHSRLEQTSEDSSKCVNASRCMGGVARLFTKVQQIRRAEPNVLLLDAGDQYQGTIWFTVYKGAEVAHFMNALRYDAMALGNHEFDNGVEGLIEPLLKEAKFPILSANIKAKGPLASQISGLYLPYKVLPVGDEVVGIVGYTSKETPFLSNPGTNLVFEDEITALQPEVDKLKTLNVNKIIALGHSGFEMDKLIAQKVRGVDVVVGGHSNTFLYTGNPPSKEVPAGKYPFIVTSDDGRKVPVVQAYAFGKYLGYLKIEFDERGNVISSHGNPILLNSSIPEDPSIKADINKWRIKLDNYSTQELGKTIVYLDGSSQSCRFRECNMGNLICDAMINNNLRHTDEMFWNHVSMCILNGGGIRSPIDERNNGTITWENLAAVLPFGGTFDLVQLKGSTLKKAFEHSVHRYGQSTGEFLQVGGIHVVYDLSRKPGDRVVKLDVLCTKCRVPSYDPLKMDEVYKVILPNFLANGGDGFQMIKDELLRHDSGDQDINVVSTYISKMKVIYPAVEGRIKFSTGSHCHGSFSLIFLSLWAVIFVLYQ.

An N-terminal signal peptide occupies residues Met1–Ala26. Positions 36 and 38 each coordinate Zn(2+). Cysteines 51 and 57 form a disulfide. Asn53 carries N-linked (GlcNAc...) asparagine glycosylation. Positions 85, 117, 220, and 243 each coordinate Zn(2+). Residues Asn311 and Asn333 are each glycosylated (N-linked (GlcNAc...) asparagine). Cystine bridges form between Cys353–Cys358 and Cys365–Cys387. An AMP-binding site is contributed by Arg354. Arg354 contacts IMP. AMP-binding residues include Asn390 and Arg395. Residues Asn390 and Arg395 each coordinate IMP. An N-linked (GlcNAc...) asparagine glycan is attached at Asn403. Phe417 serves as a coordination point for AMP. Phe417 is an IMP binding site. Cys476 and Cys479 are joined by a disulfide. Phe500 and Asp506 together coordinate AMP. The IMP site is built by Phe500 and Asp506. Ser549 carries the GPI-anchor amidated serine lipid modification. The propeptide at Thr550–Gln574 is removed in mature form.

This sequence belongs to the 5'-nucleotidase family. As to quaternary structure, homodimer. Zn(2+) is required as a cofactor.

It localises to the cell membrane. The enzyme catalyses a ribonucleoside 5'-phosphate + H2O = a ribonucleoside + phosphate. The catalysed reaction is a 2'-deoxyribonucleoside 5'-phosphate + H2O = a 2'-deoxyribonucleoside + phosphate. It carries out the reaction dTMP + H2O = thymidine + phosphate. It catalyses the reaction CMP + H2O = cytidine + phosphate. The enzyme catalyses IMP + H2O = inosine + phosphate. The catalysed reaction is AMP + H2O = adenosine + phosphate. It carries out the reaction GMP + H2O = guanosine + phosphate. It catalyses the reaction UMP + H2O = uridine + phosphate. The enzyme catalyses dAMP + H2O = 2'-deoxyadenosine + phosphate. The catalysed reaction is dCMP + H2O = 2'-deoxycytidine + phosphate. Its activity is regulated as follows. Inhibited by adenosine 5'-(alpha,beta-methylene)-diphosphate (AMPCP). Catalyzes the hydrolysis of nucleotide monophosphates, releasing inorganic phosphate and the corresponding nucleoside, with AMP being the preferred substrate. Shows a preference for ribonucleotide monophosphates over their equivalent deoxyribose forms. Other substrates include IMP, UMP, GMP, CMP, dAMP, dCMP, dTMP, NAD and NMN. In Homo sapiens (Human), this protein is 5'-nucleotidase (NT5E).